A 128-amino-acid chain; its full sequence is Small ribosomal subunit protein uS11 (128 aa).

The protein belongs to the universal ribosomal protein uS11 family. In terms of assembly, part of the 30S ribosomal subunit. Interacts with proteins S7 and S18. Binds to IF-3.

Functionally, located on the platform of the 30S subunit, it bridges several disparate RNA helices of the 16S rRNA. Forms part of the Shine-Dalgarno cleft in the 70S ribosome. The chain is Small ribosomal subunit protein uS11 from Chloroherpeton thalassium (strain ATCC 35110 / GB-78).